The sequence spans 470 residues: Putative dipeptidase TSTA_079200 (470 aa).

The chain crosses the membrane as a helical span at residues 40-60 (AWLFGLGTLGIILASVLLNPF). Residues histidine 92 and aspartate 94 each contribute to the Zn(2+) site. A disulfide bond links cysteine 143 and cysteine 237. A glycan (N-linked (GlcNAc...) asparagine) is linked at asparagine 188. Glutamate 208 is a Zn(2+) binding site. Histidine 235 contacts substrate. Zn(2+) is bound by residues histidine 279 and histidine 300. Positions 311 and 371 each coordinate substrate.

This sequence belongs to the metallo-dependent hydrolases superfamily. Peptidase M19 family. It depends on Zn(2+) as a cofactor.

The protein localises to the membrane. The catalysed reaction is an L-aminoacyl-L-amino acid + H2O = 2 an L-alpha-amino acid. Its function is as follows. Hydrolyzes a wide range of dipeptides. In Talaromyces stipitatus (strain ATCC 10500 / CBS 375.48 / QM 6759 / NRRL 1006) (Penicillium stipitatum), this protein is Putative dipeptidase TSTA_079200.